We begin with the raw amino-acid sequence, 327 residues long: Thiamine-monophosphate kinase (327 aa).

Mg(2+) contacts are provided by Asp30, Ser45, Ser46, and Asp47. Residue His54 coordinates substrate. Residue Asp76 participates in Mg(2+) binding. ATP is bound by residues Tyr106, 123–124, and Arg149; that span reads GD. Asp124 contacts Mg(2+). Asp221 is a binding site for Mg(2+). Ser223 serves as a coordination point for ATP. Asp224 serves as a coordination point for Mg(2+). Substrate-binding residues include Glu268 and Phe321.

Belongs to the thiamine-monophosphate kinase family.

The enzyme catalyses thiamine phosphate + ATP = thiamine diphosphate + ADP. It functions in the pathway cofactor biosynthesis; thiamine diphosphate biosynthesis; thiamine diphosphate from thiamine phosphate: step 1/1. Functionally, catalyzes the ATP-dependent phosphorylation of thiamine-monophosphate (TMP) to form thiamine-pyrophosphate (TPP), the active form of vitamin B1. The polypeptide is Thiamine-monophosphate kinase (Synechococcus elongatus (strain ATCC 33912 / PCC 7942 / FACHB-805) (Anacystis nidulans R2)).